The chain runs to 68 residues: ATP synthase protein 8 (68 aa).

The helical transmembrane segment at 8–24 (TWLTIITPTLLALFLIT) threads the bilayer. At Lys54 the chain carries N6-acetyllysine; alternate. Position 54 is an N6-succinyllysine; alternate (Lys54). Residue Lys57 is modified to N6-acetyllysine.

This sequence belongs to the ATPase protein 8 family. F-type ATPases have 2 components, CF(1) - the catalytic core - and CF(0) - the membrane proton channel. Component of an ATP synthase complex composed of ATP5PB, ATP5MC1, ATP5F1E, ATP5PD, ATP5ME, ATP5PF, ATP5MF, MT-ATP6, MT-ATP8, ATP5F1A, ATP5F1B, ATP5F1D, ATP5F1C, ATP5PO, ATP5MG, ATP5MK and ATP5MJ. Interacts with PRICKLE3.

The protein localises to the mitochondrion membrane. In terms of biological role, mitochondrial membrane ATP synthase (F(1)F(0) ATP synthase or Complex V) produces ATP from ADP in the presence of a proton gradient across the membrane which is generated by electron transport complexes of the respiratory chain. F-type ATPases consist of two structural domains, F(1) - containing the extramembraneous catalytic core and F(0) - containing the membrane proton channel, linked together by a central stalk and a peripheral stalk. During catalysis, ATP synthesis in the catalytic domain of F(1) is coupled via a rotary mechanism of the central stalk subunits to proton translocation. Part of the complex F(0) domain. Minor subunit located with subunit a in the membrane. This Pongo pygmaeus (Bornean orangutan) protein is ATP synthase protein 8 (MT-ATP8).